Reading from the N-terminus, the 58-residue chain is Small ribosomal subunit protein bS21 (58 aa).

This sequence belongs to the bacterial ribosomal protein bS21 family.

The polypeptide is Small ribosomal subunit protein bS21 (Lacticaseibacillus paracasei (strain ATCC 334 / BCRC 17002 / CCUG 31169 / CIP 107868 / KCTC 3260 / NRRL B-441) (Lactobacillus paracasei)).